Consider the following 97-residue polypeptide: Aspartyl/glutamyl-tRNA(Asn/Gln) amidotransferase subunit C (97 aa).

It belongs to the GatC family. Heterotrimer of A, B and C subunits.

It catalyses the reaction L-glutamyl-tRNA(Gln) + L-glutamine + ATP + H2O = L-glutaminyl-tRNA(Gln) + L-glutamate + ADP + phosphate + H(+). The catalysed reaction is L-aspartyl-tRNA(Asn) + L-glutamine + ATP + H2O = L-asparaginyl-tRNA(Asn) + L-glutamate + ADP + phosphate + 2 H(+). Its function is as follows. Allows the formation of correctly charged Asn-tRNA(Asn) or Gln-tRNA(Gln) through the transamidation of misacylated Asp-tRNA(Asn) or Glu-tRNA(Gln) in organisms which lack either or both of asparaginyl-tRNA or glutaminyl-tRNA synthetases. The reaction takes place in the presence of glutamine and ATP through an activated phospho-Asp-tRNA(Asn) or phospho-Glu-tRNA(Gln). In Prochlorococcus marinus (strain MIT 9515), this protein is Aspartyl/glutamyl-tRNA(Asn/Gln) amidotransferase subunit C.